Consider the following 355-residue polypeptide: Protein RecA (355 aa).

72-79 (GPESSGKT) serves as a coordination point for ATP.

This sequence belongs to the RecA family.

The protein resides in the cytoplasm. Its function is as follows. Can catalyze the hydrolysis of ATP in the presence of single-stranded DNA, the ATP-dependent uptake of single-stranded DNA by duplex DNA, and the ATP-dependent hybridization of homologous single-stranded DNAs. It interacts with LexA causing its activation and leading to its autocatalytic cleavage. In Wolbachia sp. subsp. Brugia malayi (strain TRS), this protein is Protein RecA.